Consider the following 430-residue polypeptide: 3-phosphoshikimate 1-carboxyvinyltransferase (430 aa).

Lys-33, Ser-34, and Arg-38 together coordinate 3-phosphoshikimate. Residue Lys-33 participates in phosphoenolpyruvate binding. Phosphoenolpyruvate is bound by residues Gly-101 and Arg-129. Positions 172, 173, 174, 201, 319, and 346 each coordinate 3-phosphoshikimate. Gln-174 is a phosphoenolpyruvate binding site. Glu-319 serves as the catalytic Proton acceptor. Phosphoenolpyruvate-binding residues include Arg-350, Arg-391, and Lys-416.

It belongs to the EPSP synthase family. Monomer.

It localises to the cytoplasm. It catalyses the reaction 3-phosphoshikimate + phosphoenolpyruvate = 5-O-(1-carboxyvinyl)-3-phosphoshikimate + phosphate. Its pathway is metabolic intermediate biosynthesis; chorismate biosynthesis; chorismate from D-erythrose 4-phosphate and phosphoenolpyruvate: step 6/7. In terms of biological role, catalyzes the transfer of the enolpyruvyl moiety of phosphoenolpyruvate (PEP) to the 5-hydroxyl of shikimate-3-phosphate (S3P) to produce enolpyruvyl shikimate-3-phosphate and inorganic phosphate. In Corynebacterium glutamicum (strain ATCC 13032 / DSM 20300 / JCM 1318 / BCRC 11384 / CCUG 27702 / LMG 3730 / NBRC 12168 / NCIMB 10025 / NRRL B-2784 / 534), this protein is 3-phosphoshikimate 1-carboxyvinyltransferase.